The primary structure comprises 337 residues: MANSC domain-containing protein 4 (337 aa).

The first 18 residues, 1–18 (MRAVELLLLLGLASMVHG), serve as a signal peptide directing secretion. The Extracellular portion of the chain corresponds to 19–278 (LCSPTVFYRD…SSENEEPWDG (260 aa)). The region spanning 33-113 (RFPGMLLDLE…LEPGASAILY (81 aa)) is the MANSC domain. N-linked (GlcNAc...) asparagine glycosylation is found at asparagine 114, asparagine 227, and asparagine 251. Composition is skewed to polar residues over residues 216 to 230 (SPST…NKTI) and 239 to 260 (TRVS…VNKT). Positions 216-277 (SPSTDFTHSP…HSSENEEPWD (62 aa)) are disordered. A helical membrane pass occupies residues 279-299 (APASAGVWLACVTLGAAVISL). The Cytoplasmic portion of the chain corresponds to 300 to 337 (CCRVVLGTSRCCGKRQGWSHMGQRSASGCRRNTLKENS). Residues 314–337 (RQGWSHMGQRSASGCRRNTLKENS) are disordered.

It localises to the membrane. In Mus musculus (Mouse), this protein is MANSC domain-containing protein 4 (Mansc4).